A 378-amino-acid polypeptide reads, in one-letter code: Erythronate-4-phosphate dehydrogenase (378 aa).

Residues Ser-45 and Thr-66 each coordinate substrate. Asp-146 and Thr-175 together coordinate NAD(+). Arg-208 is an active-site residue. Asp-232 is a binding site for NAD(+). Glu-237 is a catalytic residue. The Proton donor role is filled by His-254. Gly-257 serves as a coordination point for NAD(+). Tyr-258 serves as a coordination point for substrate.

Belongs to the D-isomer specific 2-hydroxyacid dehydrogenase family. PdxB subfamily. Homodimer.

The protein localises to the cytoplasm. The enzyme catalyses 4-phospho-D-erythronate + NAD(+) = (R)-3-hydroxy-2-oxo-4-phosphooxybutanoate + NADH + H(+). It functions in the pathway cofactor biosynthesis; pyridoxine 5'-phosphate biosynthesis; pyridoxine 5'-phosphate from D-erythrose 4-phosphate: step 2/5. Functionally, catalyzes the oxidation of erythronate-4-phosphate to 3-hydroxy-2-oxo-4-phosphonooxybutanoate. The chain is Erythronate-4-phosphate dehydrogenase from Pectobacterium atrosepticum (strain SCRI 1043 / ATCC BAA-672) (Erwinia carotovora subsp. atroseptica).